A 95-amino-acid chain; its full sequence is Aspartyl/glutamyl-tRNA(Asn/Gln) amidotransferase subunit C (95 aa).

It belongs to the GatC family. In terms of assembly, heterotrimer of A, B and C subunits.

It catalyses the reaction L-glutamyl-tRNA(Gln) + L-glutamine + ATP + H2O = L-glutaminyl-tRNA(Gln) + L-glutamate + ADP + phosphate + H(+). The catalysed reaction is L-aspartyl-tRNA(Asn) + L-glutamine + ATP + H2O = L-asparaginyl-tRNA(Asn) + L-glutamate + ADP + phosphate + 2 H(+). Allows the formation of correctly charged Asn-tRNA(Asn) or Gln-tRNA(Gln) through the transamidation of misacylated Asp-tRNA(Asn) or Glu-tRNA(Gln) in organisms which lack either or both of asparaginyl-tRNA or glutaminyl-tRNA synthetases. The reaction takes place in the presence of glutamine and ATP through an activated phospho-Asp-tRNA(Asn) or phospho-Glu-tRNA(Gln). The protein is Aspartyl/glutamyl-tRNA(Asn/Gln) amidotransferase subunit C of Syntrophotalea carbinolica (strain DSM 2380 / NBRC 103641 / GraBd1) (Pelobacter carbinolicus).